A 343-amino-acid polypeptide reads, in one-letter code: Small ribosomal subunit biogenesis GTPase RsgA (343 aa).

Residues 116 to 275 (RGQLKPVAAN…LIDSPGIREF (160 aa)) form the CP-type G domain. Residues 163–166 (NKAD) and 217–225 (GQSGVGKSS) each bind GTP. C299, C304, H306, and C312 together coordinate Zn(2+).

Belongs to the TRAFAC class YlqF/YawG GTPase family. RsgA subfamily. Monomer. Associates with 30S ribosomal subunit, binds 16S rRNA. It depends on Zn(2+) as a cofactor.

Its subcellular location is the cytoplasm. In terms of biological role, one of several proteins that assist in the late maturation steps of the functional core of the 30S ribosomal subunit. Helps release RbfA from mature subunits. May play a role in the assembly of ribosomal proteins into the subunit. Circularly permuted GTPase that catalyzes slow GTP hydrolysis, GTPase activity is stimulated by the 30S ribosomal subunit. This is Small ribosomal subunit biogenesis GTPase RsgA from Ectopseudomonas mendocina (strain ymp) (Pseudomonas mendocina).